We begin with the raw amino-acid sequence, 304 residues long: Pyridoxal 5'-phosphate synthase subunit pyroA (304 aa).

Asp-28 is a binding site for D-ribose 5-phosphate. Lys-85 acts as the Schiff-base intermediate with D-ribose 5-phosphate in catalysis. D-ribose 5-phosphate is bound at residue Gly-157. A D-glyceraldehyde 3-phosphate-binding site is contributed by Arg-169. Residues Gly-224 and Gly-245–Ser-246 contribute to the D-ribose 5-phosphate site.

It belongs to the PdxS/SNZ family.

The enzyme catalyses aldehydo-D-ribose 5-phosphate + D-glyceraldehyde 3-phosphate + L-glutamine = pyridoxal 5'-phosphate + L-glutamate + phosphate + 3 H2O + H(+). The protein operates within cofactor biosynthesis; pyridoxal 5'-phosphate biosynthesis. In terms of biological role, catalyzes the formation of pyridoxal 5'-phosphate from ribose 5-phosphate (RBP), glyceraldehyde 3-phosphate (G3P) and ammonia. The ammonia is provided by PDX2. Can also use ribulose 5-phosphate and dihydroxyacetone phosphate as substrates, resulting from enzyme-catalyzed isomerization of RBP and G3P, respectively. Also plays an indirect role in resistance to singlet oxygen-generating photosensitizers. In Emericella nidulans (strain FGSC A4 / ATCC 38163 / CBS 112.46 / NRRL 194 / M139) (Aspergillus nidulans), this protein is Pyridoxal 5'-phosphate synthase subunit pyroA (pyroA).